Consider the following 689-residue polypeptide: DNA ligase (689 aa).

NAD(+)-binding positions include 40–44 (DAEYD), 89–90 (SL), and Glu121. Lys123 acts as the N6-AMP-lysine intermediate in catalysis. The NAD(+) site is built by Arg144, Glu179, Lys295, and Lys319. Zn(2+)-binding residues include Cys413, Cys416, Cys431, and Cys437. Residues 610-689 (RAQSSLTGKI…EEWLTLIKNA (80 aa)) enclose the BRCT domain.

It belongs to the NAD-dependent DNA ligase family. LigA subfamily. Mg(2+) is required as a cofactor. The cofactor is Mn(2+).

The enzyme catalyses NAD(+) + (deoxyribonucleotide)n-3'-hydroxyl + 5'-phospho-(deoxyribonucleotide)m = (deoxyribonucleotide)n+m + AMP + beta-nicotinamide D-nucleotide.. In terms of biological role, DNA ligase that catalyzes the formation of phosphodiester linkages between 5'-phosphoryl and 3'-hydroxyl groups in double-stranded DNA using NAD as a coenzyme and as the energy source for the reaction. It is essential for DNA replication and repair of damaged DNA. This Rickettsia akari (strain Hartford) protein is DNA ligase.